Reading from the N-terminus, the 237-residue chain is Class B acid phosphatase (237 aa).

An N-terminal signal peptide occupies residues 1 to 23 (MRKVTLTLSAIALALSLNGAAMA). Aspartate 69 serves as the catalytic Nucleophile. Mg(2+) contacts are provided by aspartate 69 and aspartate 71. Residue aspartate 71 is the Proton donor of the active site. Substrate is bound by residues 137–138 (TG) and lysine 177. Aspartate 192 is a Mg(2+) binding site.

It belongs to the class B bacterial acid phosphatase family. As to quaternary structure, homotetramer. Mg(2+) is required as a cofactor.

Its subcellular location is the periplasm. The catalysed reaction is a phosphate monoester + H2O = an alcohol + phosphate. Functionally, dephosphorylates several organic phosphate monoesters. Also has a phosphotransferase activity catalyzing the transfer of low-energy phosphate groups from organic phosphate monoesters to free hydroxyl groups of various organic compounds. In Proteus mirabilis (strain HI4320), this protein is Class B acid phosphatase.